The primary structure comprises 188 residues: uncharacterized protein (188 aa).

Positions 1 to 23 (MVRPKLAFYILPLLLAFLGSALG) are cleaved as a signal peptide. A glycan (N-linked (GlcNAc...) asparagine) is linked at Asn74.

This is an uncharacterized protein from Mus musculus (Mouse).